Reading from the N-terminus, the 658-residue chain is Glycogen debranching enzyme (658 aa).

The Nucleophile role is filled by Asp336. Glu371 acts as the Proton donor in catalysis.

The protein belongs to the glycosyl hydrolase 13 family.

The enzyme catalyses Hydrolysis of (1-&gt;6)-alpha-D-glucosidic linkages to branches with degrees of polymerization of three or four glucose residues in limit dextrin.. Its pathway is glycan degradation; glycogen degradation. Its function is as follows. Removes maltotriose and maltotetraose chains that are attached by 1,6-alpha-linkage to the limit dextrin main chain, generating a debranched limit dextrin. This Klebsiella pneumoniae (strain 342) protein is Glycogen debranching enzyme.